The sequence spans 554 residues: L-ascorbate oxidase homolog (554 aa).

Positions 1-21 are cleaved as a signal peptide; it reads MGSGKVTFVALLLCLSVGVIA. Plastocyanin-like domains lie at 22 to 143 and 196 to 296; these read EDPY…LNVH and SAKV…AIIR. 3 N-linked (GlcNAc...) asparagine glycosylation sites follow: N31, N59, and N108. C101 and C540 are joined by a disulfide. N-linked (GlcNAc...) asparagine glycosylation is found at N332, N352, and N423. The Plastocyanin-like 3 domain maps to 411-521; sequence DPSKLTIATN…LGEQLYFSVL (111 aa).

Belongs to the multicopper oxidase family. As to expression, pollen.

The protein localises to the secreted. Its subcellular location is the extracellular space. In terms of biological role, probable oxidoreductase that may be involved in pollen tube growth. The protein is L-ascorbate oxidase homolog of Nicotiana tabacum (Common tobacco).